Reading from the N-terminus, the 146-residue chain is MNRFLSNATNRIDAKGRVSVPAAFRSVLTERNIQELYCFQDFVFPAISVGGLDLLDRFERQIAADDPFSPAANQMSLLIHGGGVFVRLDAEGRLMVTDFIRDFTGITNEVTFVGRADHFQLWQPEAFQALQAQAREERKLAGRRSE.

SpoVT-AbrB domains lie at 7-54 (NATN…GLDL) and 83-126 (GVFV…QPEA).

The protein belongs to the MraZ family. Forms oligomers.

It is found in the cytoplasm. It localises to the nucleoid. The chain is Transcriptional regulator MraZ from Rhizobium rhizogenes (strain K84 / ATCC BAA-868) (Agrobacterium radiobacter).